We begin with the raw amino-acid sequence, 221 residues long: Endo-1,4-beta-xylanase I (221 aa).

A signal peptide spans methionine 1–arginine 30. Positions glutamine 31–asparagine 219 constitute a GH11 domain. Glutamate 115 acts as the Nucleophile in catalysis. A disordered region spans residues aspartate 126–isoleucine 157. Glutamate 206 acts as the Proton donor in catalysis.

The protein belongs to the glycosyl hydrolase 11 (cellulase G) family. Post-translationally, the N-terminus is blocked.

The protein localises to the secreted. It catalyses the reaction Endohydrolysis of (1-&gt;4)-beta-D-xylosidic linkages in xylans.. Its pathway is glycan degradation; xylan degradation. Functionally, major xylan-degrading enzyme. Contributes to the hydrolysis of arabinoxylan, the major component of maize cell-walls. The chain is Endo-1,4-beta-xylanase I (XYL1) from Cochliobolus carbonum (Maize leaf spot fungus).